Consider the following 344-residue polypeptide: Phenylalanine--tRNA ligase alpha subunit (344 aa).

Glu-258 lines the Mg(2+) pocket.

This sequence belongs to the class-II aminoacyl-tRNA synthetase family. Phe-tRNA synthetase alpha subunit type 1 subfamily. In terms of assembly, tetramer of two alpha and two beta subunits. The cofactor is Mg(2+).

Its subcellular location is the cytoplasm. It carries out the reaction tRNA(Phe) + L-phenylalanine + ATP = L-phenylalanyl-tRNA(Phe) + AMP + diphosphate + H(+). The polypeptide is Phenylalanine--tRNA ligase alpha subunit (Thiobacillus denitrificans (strain ATCC 25259 / T1)).